We begin with the raw amino-acid sequence, 283 residues long: 4-diphosphocytidyl-2-C-methyl-D-erythritol kinase (283 aa).

Lys-13 is a catalytic residue. 96-106 lines the ATP pocket; sequence PMGGGIGGGSS. The active site involves Asp-138.

The protein belongs to the GHMP kinase family. IspE subfamily.

It catalyses the reaction 4-CDP-2-C-methyl-D-erythritol + ATP = 4-CDP-2-C-methyl-D-erythritol 2-phosphate + ADP + H(+). Its pathway is isoprenoid biosynthesis; isopentenyl diphosphate biosynthesis via DXP pathway; isopentenyl diphosphate from 1-deoxy-D-xylulose 5-phosphate: step 3/6. Its function is as follows. Catalyzes the phosphorylation of the position 2 hydroxy group of 4-diphosphocytidyl-2C-methyl-D-erythritol. The protein is 4-diphosphocytidyl-2-C-methyl-D-erythritol kinase of Pseudomonas fluorescens (strain Pf0-1).